The following is a 951-amino-acid chain: Glycine dehydrogenase (decarboxylating) 1 (951 aa).

K703 bears the N6-(pyridoxal phosphate)lysine mark.

This sequence belongs to the GcvP family. The glycine cleavage system is composed of four proteins: P, T, L and H. Pyridoxal 5'-phosphate serves as cofactor.

The catalysed reaction is N(6)-[(R)-lipoyl]-L-lysyl-[glycine-cleavage complex H protein] + glycine + H(+) = N(6)-[(R)-S(8)-aminomethyldihydrolipoyl]-L-lysyl-[glycine-cleavage complex H protein] + CO2. The glycine cleavage system catalyzes the degradation of glycine. The P protein binds the alpha-amino group of glycine through its pyridoxal phosphate cofactor; CO(2) is released and the remaining methylamine moiety is then transferred to the lipoamide cofactor of the H protein. In Pseudomonas putida (strain ATCC 47054 / DSM 6125 / CFBP 8728 / NCIMB 11950 / KT2440), this protein is Glycine dehydrogenase (decarboxylating) 1 (gcvP1).